A 260-amino-acid chain; its full sequence is Tropinone reductase homolog At2g29330 (260 aa).

13-37 lines the NADP(+) pocket; the sequence is LVTGGASGIGHAIVEELAGFGAKIH. S146 is a binding site for substrate. Y159 serves as the catalytic Proton acceptor.

This sequence belongs to the short-chain dehydrogenases/reductases (SDR) family. SDR65C subfamily.

Functionally, reductase active only on small flexible lipophilic carbonyls. No activity with cyclic monoterpenes, tropinone, nitrogen-containing tropinone analogs, tropine or pseudotropine as substrate. The sequence is that of Tropinone reductase homolog At2g29330 from Arabidopsis thaliana (Mouse-ear cress).